The chain runs to 500 residues: Lysine--tRNA ligase (500 aa).

Mg(2+) contacts are provided by Glu410 and Glu417.

The protein belongs to the class-II aminoacyl-tRNA synthetase family. As to quaternary structure, homodimer. It depends on Mg(2+) as a cofactor.

Its subcellular location is the cytoplasm. The enzyme catalyses tRNA(Lys) + L-lysine + ATP = L-lysyl-tRNA(Lys) + AMP + diphosphate. This chain is Lysine--tRNA ligase, found in Shewanella sediminis (strain HAW-EB3).